The primary structure comprises 520 residues: 6-phosphofructo-2-kinase/fructose-2,6-bisphosphatase 3 (520 aa).

Positions 1 to 245 are 6-phosphofructo-2-kinase; that stretch reads MPLELTQSRV…VYYLMNIHVQ (245 aa). 42-50 serves as a coordination point for ATP; it reads GLPARGKTY. 2 residues coordinate beta-D-fructose 6-phosphate: arginine 75 and arginine 99. Aspartate 125 is an active-site residue. The beta-D-fructose 6-phosphate site is built by threonine 127 and arginine 133. Cysteine 155 is an active-site residue. 164 to 169 contacts ATP; it reads NIMEVK. Positions 169, 190, and 194 each coordinate beta-D-fructose 6-phosphate. The segment at 246–520 is fructose-2,6-bisphosphatase; sequence PRTIYLCRHG…RSSADSSRKH (275 aa). Arginine 253 serves as a coordination point for beta-D-fructose 2,6-bisphosphate. Histidine 254 (tele-phosphohistidine intermediate) is an active-site residue. Residues asparagine 260 and glycine 266 each contribute to the beta-D-fructose 2,6-bisphosphate site. Glutamate 323 (proton donor/acceptor) is an active-site residue. The beta-D-fructose 2,6-bisphosphate site is built by tyrosine 334, arginine 348, lysine 352, tyrosine 363, glutamine 389, and arginine 393. 345 to 348 provides a ligand contact to ATP; the sequence is YALR. ATP contacts are provided by residues 389-393 and tyrosine 425; that span reads QAVLR. The disordered stretch occupies residues 443–520; the sequence is RERSEDAKKG…RSSADSSRKH (78 aa). Serine 461 is subject to Phosphoserine; by AMPK. Threonine 463 carries the post-translational modification Phosphothreonine. Serine 467 is subject to Phosphoserine. The residue at position 471 (threonine 471) is a Phosphothreonine; by PKC. Polar residues predominate over residues 502–520; that stretch reads LPGQNMKGSRSSADSSRKH.

It in the C-terminal section; belongs to the phosphoglycerate mutase family. As to quaternary structure, homodimer. Forms a heterodimer with PFKFB2. In terms of processing, phosphorylation by AMPK stimulates activity. In terms of tissue distribution, ubiquitous.

The enzyme catalyses beta-D-fructose 2,6-bisphosphate + H2O = beta-D-fructose 6-phosphate + phosphate. It carries out the reaction beta-D-fructose 6-phosphate + ATP = beta-D-fructose 2,6-bisphosphate + ADP + H(+). Its function is as follows. Catalyzes both the synthesis and degradation of fructose 2,6-bisphosphate. In Homo sapiens (Human), this protein is 6-phosphofructo-2-kinase/fructose-2,6-bisphosphatase 3 (PFKFB3).